Consider the following 651-residue polypeptide: Chaperone protein HtpG (651 aa).

Positions 1–353 (MAAHVEQLEF…AQDMSLNVSR (353 aa)) are a; substrate-binding. The b stretch occupies residues 354–569 (EILQQDRQIR…TFGITPALAR (216 aa)). The tract at residues 570–651 (MYRASGQPVP…RLTRTVGDQT (82 aa)) is c.

Belongs to the heat shock protein 90 family. Homodimer.

Its subcellular location is the cytoplasm. Functionally, molecular chaperone. Has ATPase activity. This Mycolicibacterium vanbaalenii (strain DSM 7251 / JCM 13017 / BCRC 16820 / KCTC 9966 / NRRL B-24157 / PYR-1) (Mycobacterium vanbaalenii) protein is Chaperone protein HtpG.